The chain runs to 303 residues: Protoheme IX farnesyltransferase 1 (303 aa).

Transmembrane regions (helical) follow at residues 18–38, 42–62, 91–111, 114–134, 139–159, 169–189, 213–233, 235–255, and 274–294; these read PGIIMGNLISVAGGFLLAAQG, LTLMFATMIGLSLVVASGCAV, AVLSFGIGLGIIGFAMLAIFT, LAVLFAAIGYVVYVGVYSLYM, VYGTLVGSFSGAVPPVVGYCA, VILLLMFSLWQMPHSYAIAIF, LHIVLYIAVFAVVSALLPLAG, TGIAFMAVTFATSLWWLAMAL, and FSIITITALSVTMALDFQVVA.

This sequence belongs to the UbiA prenyltransferase family. Protoheme IX farnesyltransferase subfamily.

It is found in the cell inner membrane. The enzyme catalyses heme b + (2E,6E)-farnesyl diphosphate + H2O = Fe(II)-heme o + diphosphate. Its pathway is porphyrin-containing compound metabolism; heme O biosynthesis; heme O from protoheme: step 1/1. In terms of biological role, converts heme B (protoheme IX) to heme O by substitution of the vinyl group on carbon 2 of heme B porphyrin ring with a hydroxyethyl farnesyl side group. In Shewanella frigidimarina (strain NCIMB 400), this protein is Protoheme IX farnesyltransferase 1.